A 561-amino-acid chain; its full sequence is Putative transport protein YbjL (561 aa).

Helical transmembrane passes span 8–28 (LLNGNYILLLFVVLALGLCLG), 32–52 (LGSIQLGNSIGVLVVSLLLGQ), 66–86 (FMLFIFCVGVEAGPNFFSIFF), 94–114 (MLALVMVGSALVIALGLGKLF), and 158–178 (NLSLGYALTYLIGLVSLIVGA). RCK C-terminal domains lie at 200-288 (RGLD…SFRN) and 292-373 (VFDR…RIGF). The next 5 membrane-spanning stretches (helical) occupy residues 383-403 (LLAFCAFFVIGLMIGMITFQF), 406-426 (FSFGMGNAAGLLFAGIMLGFM), 451-471 (VFMAGVGLSAGSGINNGLGAI), 475-495 (MLIAGLIVSLVPVVICFLFGA), and 540-560 (AIANVLLTLAGTIIVMVWPGL).

This sequence belongs to the AAE transporter (TC 2.A.81) family. YbjL subfamily.

The protein localises to the cell membrane. The chain is Putative transport protein YbjL from Shigella flexneri.